We begin with the raw amino-acid sequence, 680 residues long: WD repeat-containing protein 48 homolog (680 aa).

WD repeat units lie at residues 26–65, 71–110, 113–152, 164–203, 206–245, 248–287, 290–329, and 350–389; these read QHRN…SEKY, HHND…CMST, THRD…ALTA, GSKD…RIMK, GHTE…CVQT, VHKE…NKTL, EEQA…RCTL, and KGGA…KKEQ. The disordered stretch occupies residues 592–616; sequence ETTPSGGNANNSLQNSQSDANSEGS.

It belongs to the WD repeat WDR48 family. As to quaternary structure, catalytic component of the Usp12-46 deubiquitylase complex consisting of Usp12-46, Wdr20 and Uaf1; regulatory subunit that, together wtih Wdr20, stabilizes Usp12-46. The Usp12-46 deubiquitylase complex associates with arr/arrow; the interaction leads to deubiquitination and stabilization of arr/arrow.

Its function is as follows. Regulatory component of the Usp12-46 deubiquitylase complex. activates deubiquitination by increasing the catalytic turnover without increasing the affinity of deubiquitinating enzymes for the substrate. The complex deubiquitylates the wg/wingless-signaling receptor arr/arrow, which stabilizes the receptor and increases its concentration at the cell surface; this enhances the sensitivity of cells to wg/wingless-signal stimulation. This increases the amplitude and spatial range of the signaling response to the wg/wingless morphogen gradient, facilitating the precise concentration-dependent regulation of its target genes. Together with Wdr20 and Usp12-46 required for wg/wingless-mediated signaling in the wing imaginal disc and for wg/wingless-dependent regulation of intestinal stem cell proliferation. The sequence is that of WD repeat-containing protein 48 homolog from Drosophila sechellia (Fruit fly).